Consider the following 291-residue polypeptide: N-acetylmannosamine kinase (291 aa).

Residues 5–12 (AIDIGGTK) and 132–139 (GVGGGVVC) each bind ATP. 4 residues coordinate Zn(2+): histidine 156, cysteine 166, cysteine 168, and cysteine 173.

It belongs to the ROK (NagC/XylR) family. NanK subfamily. In terms of assembly, homodimer.

It catalyses the reaction an N-acyl-D-mannosamine + ATP = an N-acyl-D-mannosamine 6-phosphate + ADP + H(+). Its pathway is amino-sugar metabolism; N-acetylneuraminate degradation; D-fructose 6-phosphate from N-acetylneuraminate: step 2/5. In terms of biological role, catalyzes the phosphorylation of N-acetylmannosamine (ManNAc) to ManNAc-6-P. This is N-acetylmannosamine kinase from Salmonella gallinarum (strain 287/91 / NCTC 13346).